We begin with the raw amino-acid sequence, 423 residues long: Ferrochelatase, mitochondrial (423 aa).

A mitochondrion-targeting transit peptide spans 1-29 (MISRKIISTINSKTFYNKSLSYCTVNNNK). Cys173 provides a ligand contact to [2Fe-2S] cluster. Active-site residues include His207 and Asp380. Positions 401, 404, and 411 each coordinate [2Fe-2S] cluster.

This sequence belongs to the ferrochelatase family. In terms of assembly, monomer. [2Fe-2S] cluster is required as a cofactor.

The protein resides in the mitochondrion inner membrane. It catalyses the reaction heme b + 2 H(+) = protoporphyrin IX + Fe(2+). It participates in porphyrin-containing compound metabolism; protoheme biosynthesis; protoheme from protoporphyrin-IX: step 1/1. Functionally, catalyzes the ferrous insertion into protoporphyrin IX. The protein is Ferrochelatase, mitochondrial (hemH) of Dictyostelium discoideum (Social amoeba).